The following is a 217-amino-acid chain: Thiamine-phosphate synthase (217 aa).

Residues 39-43 and N71 each bind 4-amino-2-methyl-5-(diphosphooxymethyl)pyrimidine; that span reads QYRDK. Mg(2+)-binding residues include D72 and D91. T110 is a 4-amino-2-methyl-5-(diphosphooxymethyl)pyrimidine binding site. Residue 137–139 participates in 2-[(2R,5Z)-2-carboxy-4-methylthiazol-5(2H)-ylidene]ethyl phosphate binding; that stretch reads SNT. Residue K140 coordinates 4-amino-2-methyl-5-(diphosphooxymethyl)pyrimidine. A 2-[(2R,5Z)-2-carboxy-4-methylthiazol-5(2H)-ylidene]ethyl phosphate-binding site is contributed by G167.

It belongs to the thiamine-phosphate synthase family. The cofactor is Mg(2+).

The enzyme catalyses 2-[(2R,5Z)-2-carboxy-4-methylthiazol-5(2H)-ylidene]ethyl phosphate + 4-amino-2-methyl-5-(diphosphooxymethyl)pyrimidine + 2 H(+) = thiamine phosphate + CO2 + diphosphate. It carries out the reaction 2-(2-carboxy-4-methylthiazol-5-yl)ethyl phosphate + 4-amino-2-methyl-5-(diphosphooxymethyl)pyrimidine + 2 H(+) = thiamine phosphate + CO2 + diphosphate. It catalyses the reaction 4-methyl-5-(2-phosphooxyethyl)-thiazole + 4-amino-2-methyl-5-(diphosphooxymethyl)pyrimidine + H(+) = thiamine phosphate + diphosphate. Its pathway is cofactor biosynthesis; thiamine diphosphate biosynthesis; thiamine phosphate from 4-amino-2-methyl-5-diphosphomethylpyrimidine and 4-methyl-5-(2-phosphoethyl)-thiazole: step 1/1. Condenses 4-methyl-5-(beta-hydroxyethyl)thiazole monophosphate (THZ-P) and 2-methyl-4-amino-5-hydroxymethyl pyrimidine pyrophosphate (HMP-PP) to form thiamine monophosphate (TMP). This is Thiamine-phosphate synthase from Saccharophagus degradans (strain 2-40 / ATCC 43961 / DSM 17024).